The sequence spans 200 residues: Dephospho-CoA kinase (200 aa).

A DPCK domain is found at 3-200 (RIGLTGGIGS…LIAEILSRVN (198 aa)). An ATP-binding site is contributed by 11–16 (GSGKST).

Belongs to the CoaE family.

The protein localises to the cytoplasm. The catalysed reaction is 3'-dephospho-CoA + ATP = ADP + CoA + H(+). Its pathway is cofactor biosynthesis; coenzyme A biosynthesis; CoA from (R)-pantothenate: step 5/5. Its function is as follows. Catalyzes the phosphorylation of the 3'-hydroxyl group of dephosphocoenzyme A to form coenzyme A. The protein is Dephospho-CoA kinase of Corynebacterium glutamicum (strain ATCC 13032 / DSM 20300 / JCM 1318 / BCRC 11384 / CCUG 27702 / LMG 3730 / NBRC 12168 / NCIMB 10025 / NRRL B-2784 / 534).